Reading from the N-terminus, the 206-residue chain is Dihydrofolate reductase (206 aa).

Positions 6–204 (SLTLIVALTT…FDYEFEMWTR (199 aa)) constitute a DHFR domain. NADP(+) is bound by residues Ala-12 and 18–24 (GIGRSNS). 32-37 (EISYFK) contributes to the substrate binding site. 59 to 61 (RKT) contacts NADP(+). Position 75 (Arg-75) interacts with substrate. Residues 81–83 (TRN) and 124–131 (GGAQLYKA) each bind NADP(+).

Belongs to the dihydrofolate reductase family.

The catalysed reaction is (6S)-5,6,7,8-tetrahydrofolate + NADP(+) = 7,8-dihydrofolate + NADPH + H(+). Its pathway is cofactor biosynthesis; tetrahydrofolate biosynthesis; 5,6,7,8-tetrahydrofolate from 7,8-dihydrofolate: step 1/1. Functionally, key enzyme in folate metabolism. Catalyzes an essential reaction for de novo glycine and purine synthesis, and for DNA precursor synthesis. The polypeptide is Dihydrofolate reductase (Pneumocystis carinii).